We begin with the raw amino-acid sequence, 403 residues long: Cytoplasmic tRNA 2-thiolation protein 2 (403 aa).

This sequence belongs to the CTU2/NCS2 family.

Its subcellular location is the cytoplasm. Its pathway is tRNA modification; 5-methoxycarbonylmethyl-2-thiouridine-tRNA biosynthesis. Plays a central role in 2-thiolation of mcm(5)S(2)U at tRNA wobble positions of tRNA(Lys), tRNA(Glu) and tRNA(Gln). May act by forming a heterodimer with NCS6/CTU1 that ligates sulfur from thiocarboxylated URM1 onto the uridine of tRNAs at wobble position. The protein is Cytoplasmic tRNA 2-thiolation protein 2 of Drosophila ananassae (Fruit fly).